Reading from the N-terminus, the 312-residue chain is Olfactory receptor 2M3 (312 aa).

Over 1–25 (MARENSTFNSDFILLGIFNHSPTHT) the chain is Extracellular. N-linked (GlcNAc...) asparagine glycosylation is present at N5. Residues 26 to 49 (FLFFLVLAIFSVAFMGNSVMVLLI) traverse the membrane as a helical segment. Over 50–57 (YLDTQLHT) the chain is Cytoplasmic. The chain crosses the membrane as a helical span at residues 58-79 (PMYLLLSQLSLMDLMLICTTVP). Over 80–100 (KMAFNYLSGSKSISMAGCATQ) the chain is Extracellular. C97 and C189 are joined by a disulfide. Residues 101–120 (IFFYTSLLGSECFLLAVMAY) form a helical membrane-spanning segment. At 121 to 139 (DRYTAICHPLRYTNLMSPK) the chain is on the cytoplasmic side. A helical membrane pass occupies residues 140-158 (ICGLMTAFSWILGSTDGII). Over 159–195 (DVVATFSFSYCGSREIAHFFCDFPSLLILSCSDTSIF) the chain is Extracellular. The chain crosses the membrane as a helical span at residues 196 to 219 (EKILFICCIVMIVFPVAIIIASYA). Residues 220–236 (RVILAVIHMGSGEGRRK) are Cytoplasmic-facing. Residues 237–259 (AFTTCSSHLLVVGMYYGAALFMY) traverse the membrane as a helical segment. The Extracellular segment spans residues 260–272 (IRPTSDRSPTQDK). Residues 273–292 (MVSVFYTILTPMLNPLIYSL) form a helical membrane-spanning segment. Topologically, residues 293-312 (RNKEVTRAFMKILGKGKSGE) are cytoplasmic.

It belongs to the G-protein coupled receptor 1 family.

It is found in the cell membrane. In terms of biological role, odorant receptor. In Homo sapiens (Human), this protein is Olfactory receptor 2M3 (OR2M3).